The chain runs to 335 residues: MMFPGLLAPPAGYPSLLRPTPTLTLPQSLQSAFSGHSSFLVEDLIRISRPPTYLSRSIPAASLSPPSQEAPAALADSGTSDLGSPGSGSRRGSSPQTALSPASEPTFLKFGVNAILSSAPRRETSPALLQSPPPKTFAFPYFEGSFQPFIRSSYFPASSSVVPIPGTFSWPLAARGKPRRGMLRRAVFSDVQRKALEKTFQKQKYISKPDRKKLASKLGLKDSQVKIWFQNRRMKWRNSKERELLSSGGCREQTLPTKLNPHPDLSDVGQKGPGDEEEDNPGARLAYHAPADPRHLLEGPLPASPAHSSSPGKPSDFSDSDEDEEGEEDEEITVS.

Disordered regions lie at residues 58–102 and 240–335; these read IPAA…LSPA and KERE…ITVS. The segment covering 83–95 has biased composition (low complexity); sequence GSPGSGSRRGSSP. Positions 181 to 240 form a DNA-binding region, homeobox; it reads GMLRRAVFSDVQRKALEKTFQKQKYISKPDRKKLASKLGLKDSQVKIWFQNRRMKWRNSK. Residues 299-317 show a composition bias toward low complexity; sequence GPLPASPAHSSSPGKPSDF. Positions 318 to 335 are enriched in acidic residues; it reads SDSDEDEEGEEDEEITVS.

The protein belongs to the H2.0 homeobox family.

Its subcellular location is the nucleus. Could have a role in patterning the central nervous system during embryogenesis. Has a key role in regulating the distinct phenotypic features that distinguish two major classes of ventral interneurons, V0 and V1 neurons. Regulates the transcription factor profile, neurotransmitter phenotype, intraspinal migratory path and axonal trajectory of V0 neurons, features that differentiate them from an adjacent set of V1 neurons. The chain is Homeobox protein DBX1 (Dbx1) from Mus musculus (Mouse).